A 133-amino-acid chain; its full sequence is Egg protein CP422 (133 aa).

The signal sequence occupies residues 1-21; that stretch reads MHECMIVFFIFAVVSIYYADA. Disulfide bonds link Cys-107–Cys-121, Cys-114–Cys-125, and Cys-120–Cys-130.

The protein resides in the secreted. The chain is Egg protein CP422 (CP422) from Schistosoma japonicum (Blood fluke).